We begin with the raw amino-acid sequence, 99 residues long: Large ribosomal subunit protein bL21 (99 aa).

This sequence belongs to the bacterial ribosomal protein bL21 family. In terms of assembly, part of the 50S ribosomal subunit. Contacts protein L20.

This protein binds to 23S rRNA in the presence of protein L20. The sequence is that of Large ribosomal subunit protein bL21 from Anaplasma phagocytophilum (strain HZ).